Reading from the N-terminus, the 485-residue chain is Sphingosine kinase 1 (485 aa).

In terms of domain architecture, DAGKc spans 116–258 (GRPKKLLVFV…LDVATISQGT (143 aa)). ATP-binding positions include 126–128 (NPF) and T158. 183-186 (SGDG) contributes to the substrate binding site. D185 functions as the Proton donor/acceptor in the catalytic mechanism. Residues E190 and 215-217 (GSG) contribute to the ATP site. A substrate-binding site is contributed by D276. ATP-binding positions include R283, R289, and 446 to 448 (DGE).

Mg(2+) serves as cofactor. As to expression, highly expressed in stems and flowers and at lower levels in roots, leaves and siliques.

It is found in the vacuole membrane. It carries out the reaction a sphingoid base + ATP = a sphingoid 1-phosphate + ADP + H(+). Activated by phosphatidic acid (PA). Binding with PA stimulates the activity by promoting the binding of substrate to the catalytic site. In terms of biological role, involved in the production of sphingolipid metabolites. Phosphorylates sphingosine and various sphingoid long-chain base (LCB) products, such as phytosphingosine (PHS, 4-hydroxysphinganine), 4-hydroxy-8-sphingenine, 4,8-sphingadienine, D-erythro-dihydrosphingosine and D,L-threo-dihydrosphingosine. Is required for abscisic acid (ABA) signaling that mediates stomatal closure, inhibition of seed germination and root elongation. May function upstream of PLDALPHA1 and phosphatidic acid (PA) in an amplification response to ABA that mediates stomatal closure. This is Sphingosine kinase 1 (SPHK1) from Arabidopsis thaliana (Mouse-ear cress).